A 230-amino-acid polypeptide reads, in one-letter code: Urease accessory protein UreF (230 aa).

It belongs to the UreF family. UreD, UreF and UreG form a complex that acts as a GTP-hydrolysis-dependent molecular chaperone, activating the urease apoprotein by helping to assemble the nickel containing metallocenter of UreC. The UreE protein probably delivers the nickel.

The protein resides in the cytoplasm. Required for maturation of urease via the functional incorporation of the urease nickel metallocenter. This is Urease accessory protein UreF from Cupriavidus metallidurans (strain ATCC 43123 / DSM 2839 / NBRC 102507 / CH34) (Ralstonia metallidurans).